A 233-amino-acid chain; its full sequence is Large ribosomal subunit protein uL2 (233 aa).

Residues 195-233 (PHGGGNHQHVGRPSTVGRNAPPGRKVGRLSPKRRRVNGR) are disordered. Basic residues predominate over residues 219-233 (KVGRLSPKRRRVNGR).

Belongs to the universal ribosomal protein uL2 family. In terms of assembly, part of the 50S ribosomal subunit. Forms a bridge to the 30S subunit in the 70S ribosome.

Functionally, one of the primary rRNA binding proteins. Required for association of the 30S and 50S subunits to form the 70S ribosome, for tRNA binding and peptide bond formation. It has been suggested to have peptidyltransferase activity; this is somewhat controversial. Makes several contacts with the 16S rRNA in the 70S ribosome. The chain is Large ribosomal subunit protein uL2 from Thermoplasma acidophilum (strain ATCC 25905 / DSM 1728 / JCM 9062 / NBRC 15155 / AMRC-C165).